The chain runs to 149 residues: Large ribosomal subunit protein eL8 (149 aa).

This sequence belongs to the eukaryotic ribosomal protein eL8 family. Part of the 50S ribosomal subunit. Probably part of the RNase P complex.

It localises to the cytoplasm. Multifunctional RNA-binding protein that recognizes the K-turn motif in ribosomal RNA, the RNA component of RNase P, box H/ACA, box C/D and box C'/D' sRNAs. In Pyrobaculum calidifontis (strain DSM 21063 / JCM 11548 / VA1), this protein is Large ribosomal subunit protein eL8.